The following is a 481-amino-acid chain: Protein FAM83E (481 aa).

The DUF1669 stretch occupies residues Met1–Ala296. A disordered region spans residues Lys351 to Arg481. Low complexity predominate over residues Arg371–Ser385. 2 stretches are compositionally biased toward polar residues: residues Arg391–Asp400 and Asn465–Gly474.

This sequence belongs to the FAM83 family. As to quaternary structure, directly interacts (via DUF1669) with CSNK1A1, CSNK1A1L, CSNK1D and CSNK1E. May interact with RAF1.

Its subcellular location is the cytoplasm. It localises to the perinuclear region. May play a role in MAPK signaling. The sequence is that of Protein FAM83E from Mus musculus (Mouse).